The sequence spans 358 residues: UDP-N-acetylglucosamine--N-acetylmuramyl-(pentapeptide) pyrophosphoryl-undecaprenol N-acetylglucosamine transferase (358 aa).

UDP-N-acetyl-alpha-D-glucosamine-binding positions include 11 to 13, Asn125, Arg162, Ser196, and Gln288; that span reads TAG.

This sequence belongs to the glycosyltransferase 28 family. MurG subfamily.

Its subcellular location is the cell membrane. It catalyses the reaction di-trans,octa-cis-undecaprenyl diphospho-N-acetyl-alpha-D-muramoyl-L-alanyl-D-glutamyl-meso-2,6-diaminopimeloyl-D-alanyl-D-alanine + UDP-N-acetyl-alpha-D-glucosamine = di-trans,octa-cis-undecaprenyl diphospho-[N-acetyl-alpha-D-glucosaminyl-(1-&gt;4)]-N-acetyl-alpha-D-muramoyl-L-alanyl-D-glutamyl-meso-2,6-diaminopimeloyl-D-alanyl-D-alanine + UDP + H(+). Its pathway is cell wall biogenesis; peptidoglycan biosynthesis. Its function is as follows. Cell wall formation. Catalyzes the transfer of a GlcNAc subunit on undecaprenyl-pyrophosphoryl-MurNAc-pentapeptide (lipid intermediate I) to form undecaprenyl-pyrophosphoryl-MurNAc-(pentapeptide)GlcNAc (lipid intermediate II). This chain is UDP-N-acetylglucosamine--N-acetylmuramyl-(pentapeptide) pyrophosphoryl-undecaprenol N-acetylglucosamine transferase, found in Leifsonia xyli subsp. xyli (strain CTCB07).